The primary structure comprises 62 residues: Beta-defensin 110 (62 aa).

The N-terminal stretch at 1-21 is a signal peptide; it reads MKIHLFFFILLFWVTILPARS. 3 disulfide bridges follow: Cys32–Cys60, Cys39–Cys53, and Cys43–Cys61.

This sequence belongs to the beta-defensin family.

Its subcellular location is the secreted. In terms of biological role, has antibacterial activity. In Canis lupus familiaris (Dog), this protein is Beta-defensin 110 (DEFB110).